Reading from the N-terminus, the 363-residue chain is Fructose-bisphosphate aldolase C (363 aa).

Position 5 is a phosphotyrosine (Tyr5). A phosphoserine mark is found at Ser36, Ser39, and Ser45. Arg56 lines the substrate pocket. Lys111 is modified (N6-acetyllysine). Lys147 lines the substrate pocket. The Proton acceptor role is filled by Glu188. Lys230 acts as the Schiff-base intermediate with dihydroxyacetone-P in catalysis.

It belongs to the class I fructose-bisphosphate aldolase family. Homotetramer. Interacts with ATP6V1E1. As to expression, high expression in the adult brain.

The catalysed reaction is beta-D-fructose 1,6-bisphosphate = D-glyceraldehyde 3-phosphate + dihydroxyacetone phosphate. Its pathway is carbohydrate degradation; glycolysis; D-glyceraldehyde 3-phosphate and glycerone phosphate from D-glucose: step 4/4. This Rattus norvegicus (Rat) protein is Fructose-bisphosphate aldolase C (Aldoc).